Consider the following 199-residue polypeptide: Recombination protein RecR (199 aa).

The C4-type zinc-finger motif lies at 58 to 73 (CQTCHHLSAEPTCEIC). The Toprim domain maps to 81 to 175 (GQICVVADSR…RVSRIAYGLP (95 aa)).

This sequence belongs to the RecR family.

Functionally, may play a role in DNA repair. It seems to be involved in an RecBC-independent recombinational process of DNA repair. It may act with RecF and RecO. This Synechococcus sp. (strain WH7803) protein is Recombination protein RecR.